The sequence spans 809 residues: AP-3 complex subunit beta (809 aa).

HEAT repeat units follow at residues 37-76 (YYSQ…DDDS), 112-151 (DPNL…SSLA), 153-186 (IILH…AGKN), 187-224 (DYHE…DHLE), and 524-561 (KICP…YDID). Ser-693, Ser-698, Ser-724, and Ser-726 each carry phosphoserine. Disordered regions lie at residues 708–739 (FTSS…FTSQ) and 763–809 (PRKI…HLEL). The segment covering 722–739 (GDSNSISGKGNVNTFTSQ) has biased composition (polar residues). Over residues 772 to 791 (ESSDEDEDESEESSDDDEYS) the composition is skewed to acidic residues. A compositionally biased stretch (low complexity) spans 792–809 (DSSLGTSSSGTSSSHLEL).

Belongs to the adaptor complexes large subunit family. As to quaternary structure, adaptor protein complex 3 (AP-3) is a heterotetramer composed of 2 large adaptins (APL5 and APL6), a medium adaptin (APM3) and a small adaptin (APS3). Pyrophosphorylated by 5-diphosphoinositol pentakisphosphate (5-IP7). Serine pyrophosphorylation is achieved by Mg(2+)-dependent, but enzyme independent transfer of a beta-phosphate from a inositol pyrophosphate to a pre-phosphorylated serine residue.

Its subcellular location is the golgi apparatus. It localises to the cytoplasmic vesicle. The protein localises to the clathrin-coated vesicle membrane. In terms of biological role, part of the AP-3 complex, an adaptor-related complex which is not clathrin-associated. The complex is associated with the Golgi region as well as more peripheral structures. It facilitates the budding of vesicles from the Golgi membrane and may be directly involved in trafficking to the vacuole. Required for the transport via the ALP pathway, which directs the transport of the cargo proteins PHO8 and VAM3 to the vacuole. The chain is AP-3 complex subunit beta (APL6) from Saccharomyces cerevisiae (strain ATCC 204508 / S288c) (Baker's yeast).